A 94-amino-acid chain; its full sequence is Co-chaperonin GroES (94 aa).

The protein belongs to the GroES chaperonin family. Heptamer of 7 subunits arranged in a ring. Interacts with the chaperonin GroEL.

Its subcellular location is the cytoplasm. Its function is as follows. Together with the chaperonin GroEL, plays an essential role in assisting protein folding. The GroEL-GroES system forms a nano-cage that allows encapsulation of the non-native substrate proteins and provides a physical environment optimized to promote and accelerate protein folding. GroES binds to the apical surface of the GroEL ring, thereby capping the opening of the GroEL channel. The chain is Co-chaperonin GroES from Clostridium novyi (strain NT).